Consider the following 201-residue polypeptide: Potassium-transporting ATPase KdpC subunit (201 aa).

A helical transmembrane segment spans residues 7 to 29; it reads PALVLLTALTAITGLAYPLAMTG.

The protein belongs to the KdpC family. The system is composed of three essential subunits: KdpA, KdpB and KdpC.

It localises to the cell inner membrane. In terms of biological role, part of the high-affinity ATP-driven potassium transport (or Kdp) system, which catalyzes the hydrolysis of ATP coupled with the electrogenic transport of potassium into the cytoplasm. This subunit acts as a catalytic chaperone that increases the ATP-binding affinity of the ATP-hydrolyzing subunit KdpB by the formation of a transient KdpB/KdpC/ATP ternary complex. This chain is Potassium-transporting ATPase KdpC subunit, found in Methylorubrum populi (strain ATCC BAA-705 / NCIMB 13946 / BJ001) (Methylobacterium populi).